A 441-amino-acid polypeptide reads, in one-letter code: Chromosome partition protein MukF (441 aa).

The interval 208-236 (LDETSGNLRELQDTLNAAGDKLQAQLLRI) is leucine-zipper.

Belongs to the MukF family. As to quaternary structure, interacts, and probably forms a ternary complex, with MukE and MukB via its C-terminal region. The complex formation is stimulated by calcium or magnesium. It is required for an interaction between MukE and MukB.

The protein resides in the cytoplasm. Its subcellular location is the nucleoid. Involved in chromosome condensation, segregation and cell cycle progression. May participate in facilitating chromosome segregation by condensation DNA from both sides of a centrally located replisome during cell division. Not required for mini-F plasmid partitioning. Probably acts via its interaction with MukB and MukE. Overexpression results in anucleate cells. It has a calcium binding activity. This chain is Chromosome partition protein MukF, found in Pasteurella multocida (strain Pm70).